Consider the following 2237-residue polypeptide: Zinc finger protein 318 (2237 aa).

2 stretches are compositionally biased toward low complexity: residues 1-12 (MYRSGSRSSVSS) and 30-39 (GASSGPTRRP). Residues 1–221 (MYRSGSRSSV…DMDRDDLTDD (221 aa)) form a disordered region. Positions 1 to 1114 (MYRSGSRSSV…THMHNKKHTQ (1114 aa)) are interaction with AR. A Phosphoserine modification is found at S40. Positions 53-66 (PARRHRSPSGHRGR) are enriched in basic residues. S69, S109, and S111 each carry phosphoserine. Over residues 140–156 (IRGESRADFARDGRGDH) the composition is skewed to basic and acidic residues. Phosphoserine occurs at positions 167 and 205. Y237 bears the Phosphotyrosine mark. 2 positions are modified to phosphoserine: S239 and S246. The tract at residues 263–350 (LHRPEFSPQS…SPRFLDPEFR (88 aa)) is disordered. Basic and acidic residues-rich tracts occupy residues 274–290 (CHDELLRGTERNRDKLK) and 297–317 (RSEERSREAKRPRYDDTEKVH). Residues 321-332 (GDHSSFTSGTRN) are compositionally biased toward polar residues. A coiled-coil region spans residues 348 to 376 (EFRELDLARRKREEEEEQSRSLSQELVGV). Phosphoserine is present on residues S497, S502, S531, and S557. Disordered stretches follow at residues 551 to 612 (QEKR…ESLE) and 645 to 732 (QERL…TKNS). Residues 560 to 576 (DIEDEEKFLYGDEEEDI) are compositionally biased toward acidic residues. Glycyl lysine isopeptide (Lys-Gly) (interchain with G-Cter in SUMO2) cross-links involve residues K577, K583, K596, and K607. Basic and acidic residues predominate over residues 577 to 586 (KSESPLKSLE). The span at 592–602 (GTRQKANSLPS) shows a compositional bias: polar residues. 2 stretches are compositionally biased toward basic and acidic residues: residues 658 to 677 (SADRRLSADRHLSGDRHFSA) and 692 to 706 (RSSDPHRPESRETHH). T865 is modified (phosphothreonine). Residues 904-1003 (EKNRASQKQK…SELDKVAQIL (100 aa)) adopt a coiled-coil conformation. Composition is skewed to basic and acidic residues over residues 945–964 (QQGEMLRKKRREKDGHKDPL), 1013–1037 (KSSNDSKESTEKPEKEKSKSPEKEL), and 1047–1056 (KESKMNEKSC). Disordered regions lie at residues 945-966 (QQGEMLRKKRREKDGHKDPLLM) and 1013-1072 (KSSN…TVKQ). Phosphoserine is present on S1032. Positions 1058–1072 (KSPSSTESLQPTVKQ) are enriched in polar residues. At S1059 the chain carries Phosphoserine. 2 Matrin-type zinc fingers span residues 1085–1119 (AGSHWCKDCNTTCGTMFDFFTHMHNKKHTQTLDPY) and 1158–1180 (FYCQLCEEFLGDPISGEQHVKGH). 3 disordered regions span residues 1245-1289 (VKED…KKEP), 1302-1342 (SWKK…VGKA), and 1366-1395 (TTSTQTKIRPNLPIPSTVLRKSGSATVSKP). Basic and acidic residues-rich tracts occupy residues 1280-1289 (QVKEEVKKEP), 1304-1313 (KKPEKEEEKG), and 1321-1341 (PKEDTVETSKDRDDGKAEVGK). S1445 carries the phosphoserine modification. 4 disordered regions span residues 1449–1497 (KVEL…LSAP), 1614–1651 (HETKLSSSTLANGESSSLPRTESSDFSSTCTLNSSMSS), 1727–1770 (TSGS…HCQT), and 1790–1867 (EVYQ…MTGH). Pro residues predominate over residues 1469 to 1490 (LPPPPPPPPPPPPPPPPPPPQA). The span at 1618-1639 (LSSSTLANGESSSLPRTESSDF) shows a compositional bias: polar residues. Low complexity predominate over residues 1640–1651 (SSTCTLNSSMSS). Basic and acidic residues predominate over residues 1734–1749 (DTHKDRPPEGKIRFDL). Positions 1757–1770 (TDSTSHLSDTHCQT) are enriched in polar residues. Basic and acidic residues predominate over residues 1796-1814 (GCRESEMKRKTELKGKVAT). A coiled-coil region spans residues 1798-1827 (RESEMKRKTELKGKVATEEEEEEEEEGANS). Positions 1815 to 1824 (EEEEEEEEEG) are enriched in acidic residues. A compositionally biased stretch (polar residues) spans 1828–1840 (IEDSNSNHGNRNT). Residues S1878, S1908, S1988, S2044, S2054, S2140, S2143, S2194, and S2206 each carry the phosphoserine modification. Residues 2039 to 2064 (EGAHSSSNSRNGRITSNSLETGHPVE) are disordered. Positions 2041–2058 (AHSSSNSRNGRITSNSLE) are enriched in polar residues. Residues 2178-2237 (EDNDSALNLVKTPPSGSPSRDQVVGGNVSPREMPEQEAAVDVIPDHTRSNVYNSQDYLNG) form a disordered region. Polar residues predominate over residues 2226 to 2237 (SNVYNSQDYLNG).

As to quaternary structure, homodimer. Heterodimer of isoform 1 and isoform 2. Isoform 1 and isoform 2 interact with AR. As to expression, isoform 1 and isoform 2 are highly expressed in testis, moderately expressed in adrenal gland and uterus and faintly expressed in brain, kidney and liver. Isoform 1 is expressed more in adrenal gland, uterus and liver than isoform 2 is. Expression during testicular development of isoform 1 and isoform 2 is restricted to spermatocytes at the pachytene stage of meiotic prophase and to round and elongated spermatids.

It is found in the nucleus. In terms of biological role, acts as a transcriptional corepressor for AR-mediated transactivation function. May act as a transcriptional regulator during spermatogenesis and in particular, during meiotic division. Functionally, acts as a transcriptional coactivator for AR-mediated transactivation function. May act as a transcriptional regulator during spermatogenesis and in particular, during meiotic division. The chain is Zinc finger protein 318 (Znf318) from Mus musculus (Mouse).